Reading from the N-terminus, the 100-residue chain is Histone H3-like 2 (100 aa).

The disordered stretch occupies residues 1–46; it reads MARMKHTARMSTGGKAPRKQLASKALRKAPPPPTKGVKQPTTTTSG.

The protein belongs to the histone H3 family. The nucleosome is a histone octamer containing two molecules each of H2A, H2B, H3 and H4 assembled in one H3-H4 heterotetramer and two H2A-H2B heterodimers. The octamer wraps approximately 147 bp of DNA. In terms of tissue distribution, pollen specific.

The protein localises to the nucleus. It localises to the chromosome. Core component of nucleosome. Nucleosomes wrap and compact DNA into chromatin, limiting DNA accessibility to the cellular machineries which require DNA as a template. Histones thereby play a central role in transcription regulation, DNA repair, DNA replication and chromosomal stability. DNA accessibility is regulated via a complex set of post-translational modifications of histones, also called histone code, and nucleosome remodeling. The protein is Histone H3-like 2 (gcH3) of Lilium longiflorum (Trumpet lily).